A 417-amino-acid polypeptide reads, in one-letter code: UDP-N-acetylmuramoylalanine--D-glutamate ligase (417 aa).

Glycine 104–threonine 110 is a binding site for ATP.

It belongs to the MurCDEF family.

It localises to the cytoplasm. The enzyme catalyses UDP-N-acetyl-alpha-D-muramoyl-L-alanine + D-glutamate + ATP = UDP-N-acetyl-alpha-D-muramoyl-L-alanyl-D-glutamate + ADP + phosphate + H(+). It participates in cell wall biogenesis; peptidoglycan biosynthesis. Functionally, cell wall formation. Catalyzes the addition of glutamate to the nucleotide precursor UDP-N-acetylmuramoyl-L-alanine (UMA). This chain is UDP-N-acetylmuramoylalanine--D-glutamate ligase, found in Francisella tularensis subsp. novicida (strain U112).